A 269-amino-acid polypeptide reads, in one-letter code: tRNA-cytidine(32) 2-sulfurtransferase (269 aa).

A PP-loop motif motif is present at residues 53 to 58 (SGGKDS). Residues cysteine 128, cysteine 131, and cysteine 218 each contribute to the [4Fe-4S] cluster site.

It belongs to the TtcA family. As to quaternary structure, homodimer. Mg(2+) is required as a cofactor. [4Fe-4S] cluster serves as cofactor.

The protein localises to the cytoplasm. It catalyses the reaction cytidine(32) in tRNA + S-sulfanyl-L-cysteinyl-[cysteine desulfurase] + AH2 + ATP = 2-thiocytidine(32) in tRNA + L-cysteinyl-[cysteine desulfurase] + A + AMP + diphosphate + H(+). It participates in tRNA modification. Its function is as follows. Catalyzes the ATP-dependent 2-thiolation of cytidine in position 32 of tRNA, to form 2-thiocytidine (s(2)C32). The sulfur atoms are provided by the cysteine/cysteine desulfurase (IscS) system. This is tRNA-cytidine(32) 2-sulfurtransferase from Pelobacter propionicus (strain DSM 2379 / NBRC 103807 / OttBd1).